Reading from the N-terminus, the 504-residue chain is Maturase K (504 aa).

It belongs to the intron maturase 2 family. MatK subfamily.

It localises to the plastid. The protein resides in the chloroplast. Functionally, usually encoded in the trnK tRNA gene intron. Probably assists in splicing its own and other chloroplast group II introns. The chain is Maturase K from Berzelia lanuginosa (Buttonbush).